We begin with the raw amino-acid sequence, 398 residues long: Homeobox protein knotted-1-like 1 (398 aa).

Disordered regions lie at residues 43–69, 172–192, and 234–277; these read TFHLQSSGGGGGGGSGDQCNFQSPGTH, EFEARQRSSGTSRETSKDPEL, and NNNA…PRAE. Residues 49–58 show a composition bias toward gly residues; it reads SGGGGGGGSG. The 21-residue stretch at 280–300 folds into the ELK domain; it reads ELKNHLLRKYSGYLSSLKQEL. Residues 301 to 364 constitute a DNA-binding region (homeobox; TALE-type); that stretch reads SKKKKKGKLP…NQRKRHWKPS (64 aa).

This sequence belongs to the TALE/KNOX homeobox family. Expressed only in the stems.

It is found in the nucleus. Its function is as follows. Probably binds to the DNA sequence 5'-TGAC-3'. The polypeptide is Homeobox protein knotted-1-like 1 (Malus domestica (Apple)).